The sequence spans 126 residues: Fatty acid-binding protein 2, liver (126 aa).

Cholate is bound by residues 54-56, 99-101, and arginine 121; these read TPN and HIQ.

Belongs to the calycin superfamily. Fatty-acid binding protein (FABP) family.

It localises to the cytoplasm. Binds free fatty acids and their coenzyme A derivatives, bilirubin, and some other small molecules in the cytoplasm. May be involved in intracellular lipid transport. The specificity of axolotl L-FABP differs from that of LB-FABP. Binds 2 ligands per protein molecule. The protein is Fatty acid-binding protein 2, liver of Ambystoma mexicanum (Axolotl).